Here is a 67-residue protein sequence, read N- to C-terminus: Protein AaeX (67 aa).

A run of 2 helical transmembrane segments spans residues 3–23 and 43–63; these read LFPV…ELLL and FVWH…YLIS.

The protein belongs to the AaeX family.

It is found in the cell membrane. In Salmonella agona (strain SL483), this protein is Protein AaeX.